The following is a 239-amino-acid chain: Phosphoglycolate phosphatase (239 aa).

The active-site Nucleophile is the Asp14. Residues Asp14 and Asp16 each coordinate Mg(2+). A substrate-binding site is contributed by Lys160. 2 residues coordinate Mg(2+): Asp183 and Asp187.

The protein belongs to the archaeal SPP-like hydrolase family. Mg(2+) is required as a cofactor.

It carries out the reaction 2-phosphoglycolate + H2O = glycolate + phosphate. Catalyzes the dephosphorylation of 2-phosphoglycolate. This chain is Phosphoglycolate phosphatase, found in Aeropyrum pernix (strain ATCC 700893 / DSM 11879 / JCM 9820 / NBRC 100138 / K1).